The sequence spans 215 residues: Octanoyltransferase (215 aa).

Positions 31 to 206 constitute a BPL/LPL catalytic domain; the sequence is PDSQDEIWLV…QLVKHLDYAE (176 aa). Substrate-binding positions include 70–77, 137–139, and 150–152; these read RGGQVTYH, SLG, and GLA. C168 acts as the Acyl-thioester intermediate in catalysis.

It belongs to the LipB family.

It is found in the cytoplasm. It catalyses the reaction octanoyl-[ACP] + L-lysyl-[protein] = N(6)-octanoyl-L-lysyl-[protein] + holo-[ACP] + H(+). Its pathway is protein modification; protein lipoylation via endogenous pathway; protein N(6)-(lipoyl)lysine from octanoyl-[acyl-carrier-protein]: step 1/2. Its function is as follows. Catalyzes the transfer of endogenously produced octanoic acid from octanoyl-acyl-carrier-protein onto the lipoyl domains of lipoate-dependent enzymes. Lipoyl-ACP can also act as a substrate although octanoyl-ACP is likely to be the physiological substrate. The protein is Octanoyltransferase of Pseudomonas putida (strain W619).